A 293-amino-acid chain; its full sequence is TBC1 domain family member 7 (293 aa).

Positions 50–231 constitute a Rab-GAP TBC domain; the sequence is PLPSMYRALV…RVWDKVVSGS (182 aa).

Component of the TSC-TBC complex (also named Rhebulator complex), composed of 2 molecules of TSC1, 2 molecules of TSC2 and 1 molecule of TBC1D7. Interacts with TSC1 (via C-terminal half of the coiled-coil domain). As to expression, highly expressed in heart, and slightly in kidney, liver and placenta.

The protein localises to the lysosome membrane. It is found in the cytoplasmic vesicle. It localises to the cytoplasm. The protein resides in the cytosol. Non-catalytic component of the TSC-TBC complex, a multiprotein complex that acts as a negative regulator of the canonical mTORC1 complex, an evolutionarily conserved central nutrient sensor that stimulates anabolic reactions and macromolecule biosynthesis to promote cellular biomass generation and growth. The TSC-TBC complex acts as a GTPase-activating protein (GAP) for the small GTPase RHEB, a direct activator of the protein kinase activity of mTORC1. In absence of nutrients, the TSC-TBC complex inhibits mTORC1, thereby preventing phosphorylation of ribosomal protein S6 kinase (RPS6KB1 and RPS6KB2) and EIF4EBP1 (4E-BP1) by the mTORC1 signaling. The TSC-TBC complex is inactivated in response to nutrients, relieving inhibition of mTORC1. The chain is TBC1 domain family member 7 from Homo sapiens (Human).